Here is a 305-residue protein sequence, read N- to C-terminus: Peroxidase A2 (305 aa).

Gln1 carries the post-translational modification Pyrrolidone carboxylic acid. N-linked (GlcNAc...) asparagine glycosylation is found at Asn3 and Asn13. Intrachain disulfides connect Cys11-Cys91, Cys44-Cys49, Cys97-Cys299, and Cys176-Cys208. His42 functions as the Proton acceptor in the catalytic mechanism. Residues Asp43, Val46, Gly48, Asp50, and Ser52 each contribute to the Ca(2+) site. Pro139 provides a ligand contact to substrate. An N-linked (GlcNAc...) asparagine glycan is attached at Asn147. Position 169 (His169) interacts with heme b. Thr170 is a binding site for Ca(2+). 3 N-linked (GlcNAc...) asparagine glycosylation sites follow: Asn185, Asn197, and Asn211. 3 residues coordinate Ca(2+): Asp221, Thr224, and Asp229. N-linked (GlcNAc...) asparagine glycosylation occurs at Asn267.

The protein belongs to the peroxidase family. Classical plant (class III) peroxidase subfamily. It depends on Ca(2+) as a cofactor. Requires heme b as cofactor.

It carries out the reaction 2 a phenolic donor + H2O2 = 2 a phenolic radical donor + 2 H2O. Functionally, removal of H(2)O(2), oxidation of toxic reductants, biosynthesis and degradation of lignin, suberization, auxin catabolism, response to environmental stresses such as wounding, pathogen attack and oxidative stress. These functions might be dependent on each isozyme/isoform in each plant tissue. This chain is Peroxidase A2 (HRPA2), found in Armoracia rusticana (Horseradish).